The following is a 384-amino-acid chain: uncharacterized protein (384 aa).

The next 12 helical transmembrane spans lie at 22 to 42, 52 to 72, 81 to 101, 106 to 126, 143 to 163, 164 to 184, 202 to 222, 240 to 260, 276 to 296, 299 to 319, 327 to 347, and 352 to 372; these read LAFFIAGLGMAAWAPLVPFAK, LGLLLLCIGIGSMLAMPLTGV, AVILLAGAVLCLDLPLLVLMN, MAIALLVFGAAMGIIDVAMNI, FHGLFSVGGIVGAGGVSALLW, LGLNPLTAIMATVVLMIILLL, LFVFPRGWVMFIGFLCFVMFL, GMSPSQAGMGYAVFAIAMTLG, VLLGGSLCSAIGIIIAISIDS, AAIIGFMLVGFGASNVVPILF, VMPANLAVASITTIGYAGILA, and IGFIAQLSSLSVAFGCVALLL.

The protein belongs to the major facilitator superfamily.

The protein resides in the membrane. This is an uncharacterized protein from Yersinia pestis.